The following is a 394-amino-acid chain: p-hydroxybenzoate hydroxylase (394 aa).

FAD contacts are provided by residues Ser-13, Glu-32, 42–47 (RIRAGV), and Gln-102. Substrate is bound by residues Tyr-201, 212-214 (SQR), and Tyr-222. Asp-286 provides a ligand contact to FAD. Residue Pro-293 participates in substrate binding. Residue 299-300 (LN) participates in FAD binding.

Belongs to the aromatic-ring hydroxylase family. As to quaternary structure, homodimer. FAD is required as a cofactor.

The catalysed reaction is 4-hydroxybenzoate + NADPH + O2 + H(+) = 3,4-dihydroxybenzoate + NADP(+) + H2O. It functions in the pathway aromatic compound metabolism; benzoate degradation via hydroxylation; 3,4-dihydroxybenzoate from benzoate: step 2/2. In terms of biological role, catalyzes the incorporation of an atom of dioxygen into p-hydroxybenzoate (p-OHB) to form 3,4-dihydroxybenzoate (3,4DOHB). The reaction occurs in two parts: reduction of the flavin adenine dinucleotide (FAD) in the enzyme by reduced nicotinamide adenine dinucleotide phosphate (NADPH) in response to binding p-hydroxybenzoate to the enzyme and oxidation of reduced FAD with oxygen to form a hydroperoxide, which then oxygenates p-hydroxybenzoate. The protein is p-hydroxybenzoate hydroxylase (pobA) of Pseudomonas fluorescens.